Here is a 249-residue protein sequence, read N- to C-terminus: Probable transcriptional regulatory protein LBJ_0543 (249 aa).

Belongs to the TACO1 family.

It localises to the cytoplasm. This is Probable transcriptional regulatory protein LBJ_0543 from Leptospira borgpetersenii serovar Hardjo-bovis (strain JB197).